Consider the following 188-residue polypeptide: Peptidyl-tRNA hydrolase (188 aa).

TRNA is bound at residue Y16. The active-site Proton acceptor is the H21. F66, N68, and N114 together coordinate tRNA.

It belongs to the PTH family. As to quaternary structure, monomer.

The protein localises to the cytoplasm. The catalysed reaction is an N-acyl-L-alpha-aminoacyl-tRNA + H2O = an N-acyl-L-amino acid + a tRNA + H(+). Hydrolyzes ribosome-free peptidyl-tRNAs (with 1 or more amino acids incorporated), which drop off the ribosome during protein synthesis, or as a result of ribosome stalling. In terms of biological role, catalyzes the release of premature peptidyl moieties from peptidyl-tRNA molecules trapped in stalled 50S ribosomal subunits, and thus maintains levels of free tRNAs and 50S ribosomes. The protein is Peptidyl-tRNA hydrolase of Citrifermentans bemidjiense (strain ATCC BAA-1014 / DSM 16622 / JCM 12645 / Bem) (Geobacter bemidjiensis).